The following is a 344-amino-acid chain: RNA 3'-terminal phosphate cyclase (344 aa).

ATP contacts are provided by residues Q102 and 284–288 (FLGDQ). H308 functions as the Tele-AMP-histidine intermediate in the catalytic mechanism.

It belongs to the RNA 3'-terminal cyclase family. Type 1 subfamily.

It is found in the cytoplasm. It carries out the reaction a 3'-end 3'-phospho-ribonucleotide-RNA + ATP = a 3'-end 2',3'-cyclophospho-ribonucleotide-RNA + AMP + diphosphate. Its function is as follows. Catalyzes the conversion of 3'-phosphate to a 2',3'-cyclic phosphodiester at the end of RNA. The mechanism of action of the enzyme occurs in 3 steps: (A) adenylation of the enzyme by ATP; (B) transfer of adenylate to an RNA-N3'P to produce RNA-N3'PP5'A; (C) and attack of the adjacent 2'-hydroxyl on the 3'-phosphorus in the diester linkage to produce the cyclic end product. The biological role of this enzyme is unknown but it is likely to function in some aspects of cellular RNA processing. The chain is RNA 3'-terminal phosphate cyclase from Thermococcus gammatolerans (strain DSM 15229 / JCM 11827 / EJ3).